We begin with the raw amino-acid sequence, 233 residues long: Small ribosomal subunit protein uS5 (233 aa).

The span at 1 to 13 (MAEETQNTVATES) shows a compositional bias: polar residues. A disordered region spans residues 1-40 (MAEETQNTVATESNNEDRKGRRGQRGEGRRGERRNRREEN). A compositionally biased stretch (basic and acidic residues) spans 15 to 40 (NEDRKGRRGQRGEGRRGERRNRREEN). In terms of domain architecture, S5 DRBM spans 45 to 108 (LLDRVVTINR…LDAKKHMFSV (64 aa)).

The protein belongs to the universal ribosomal protein uS5 family. As to quaternary structure, part of the 30S ribosomal subunit. Contacts proteins S4 and S8.

With S4 and S12 plays an important role in translational accuracy. Functionally, located at the back of the 30S subunit body where it stabilizes the conformation of the head with respect to the body. The polypeptide is Small ribosomal subunit protein uS5 (Bifidobacterium longum (strain NCC 2705)).